The primary structure comprises 416 residues: Esterase FrsA (416 aa).

Positions 19-39 (ETSTLVRRTRHDQETQGLHST) are disordered.

It belongs to the FrsA family.

It carries out the reaction a carboxylic ester + H2O = an alcohol + a carboxylate + H(+). Catalyzes the hydrolysis of esters. In Pectobacterium atrosepticum (strain SCRI 1043 / ATCC BAA-672) (Erwinia carotovora subsp. atroseptica), this protein is Esterase FrsA.